Here is a 1136-residue protein sequence, read N- to C-terminus: Unconventional myosin-Ib (1136 aa).

Residues 15 to 701 (IGVGDTVLLE…TLFQLEDLRK (687 aa)) form the Myosin motor domain. Serine 60 is modified (phosphoserine). Residue 108-115 (GESGAGKT) coordinates ATP. A Glycyl lysine isopeptide (Lys-Gly) (interchain with G-Cter in SUMO1); alternate cross-link involves residue lysine 287. Residue lysine 287 forms a Glycyl lysine isopeptide (Lys-Gly) (interchain with G-Cter in SUMO2); alternate linkage. The interval 592-599 (YIRCIKPN) is actin-binding. IQ domains are found at residues 704 to 729 (LEDL…LMKR), 730 to 750 (SQVV…YQQI), 750 to 778 (IKSS…HQKR), 780 to 807 (KEAA…DEAR), 808 to 837 (NKHA…EARR), and 837 to 866 (RKHA…ANAG). Residues 952–1136 (KALYPSSVGQ…NNRLLEVAVP (185 aa)) enclose the TH1 domain.

It belongs to the TRAFAC class myosin-kinesin ATPase superfamily. Myosin family.

Motor protein that may participate in process critical to neuronal development and function such as cell migration, neurite outgrowth and vesicular transport. The chain is Unconventional myosin-Ib (Myo1b) from Rattus norvegicus (Rat).